We begin with the raw amino-acid sequence, 372 residues long: MALIEPTAINNKKVIVGMSGGVDSSVSAYLLLKQGYQVEGLFMKNWEEDDTDEYCAAADDLKDAQAVCDKLGIKLHTVNFASEYWDNVFEYFLAEYKAGRTPNPDIICNKEIKFKAFLEFADDILDADYIAMGHYVRRSDESGQSQMLRGRDGNKDQSYFLYTLSHEQISRSLFPVGELEKSEVREIAKEMGLVTHDKKDSTGICFIGERKFTDFLSTFLPAQPGNIETAEGEIIGKHQGLMYHTLGQRKGLGIGGMKNSNDDPWYVVDKEMDRNVLVVGQGGHHPRLMSVGFYADQLHWVDRKGPIDGAQITVKTRYRQRDVACTLTYEGDDRIKVIFDEPVAAVTPGQSAVFYDAELCLGGGIIDSLIRE.

Residues 17–24 and Met-43 each bind ATP; that span reads GMSGGVDS. The segment at 103 to 105 is interaction with target base in tRNA; sequence NPD. Catalysis depends on Cys-108, which acts as the Nucleophile. Residues Cys-108 and Cys-205 are joined by a disulfide bond. Gly-133 contacts ATP. The interaction with tRNA stretch occupies residues 155 to 157; it reads KDQ. Catalysis depends on Cys-205, which acts as the Cysteine persulfide intermediate. The segment at 317 to 318 is interaction with tRNA; sequence RY.

It belongs to the MnmA/TRMU family.

The protein resides in the cytoplasm. The enzyme catalyses S-sulfanyl-L-cysteinyl-[protein] + uridine(34) in tRNA + AH2 + ATP = 2-thiouridine(34) in tRNA + L-cysteinyl-[protein] + A + AMP + diphosphate + H(+). Catalyzes the 2-thiolation of uridine at the wobble position (U34) of tRNA, leading to the formation of s(2)U34. In Shewanella sediminis (strain HAW-EB3), this protein is tRNA-specific 2-thiouridylase MnmA.